The following is a 188-amino-acid chain: dCTP deaminase (188 aa).

Residues 111-116 (KSTYAR), 135-137 (TLE), Gln156, Tyr170, Lys179, and Gln180 contribute to the dCTP site. Catalysis depends on Glu137, which acts as the Proton donor/acceptor.

Belongs to the dCTP deaminase family. In terms of assembly, homotrimer.

It catalyses the reaction dCTP + H2O + H(+) = dUTP + NH4(+). Its pathway is pyrimidine metabolism; dUMP biosynthesis; dUMP from dCTP (dUTP route): step 1/2. Functionally, catalyzes the deamination of dCTP to dUTP. This chain is dCTP deaminase, found in Rickettsia akari (strain Hartford).